Consider the following 307-residue polypeptide: Small ribosomal subunit biogenesis GTPase RsgA (307 aa).

The CP-type G domain maps to 80 to 237 (KADLRQTIVS…IVDTPGIKEF (158 aa)). GTP-binding positions include 129–132 (NKID) and 180–188 (GQSGVGKSS). Positions 261, 266, 268, and 274 each coordinate Zn(2+).

It belongs to the TRAFAC class YlqF/YawG GTPase family. RsgA subfamily. Monomer. Associates with 30S ribosomal subunit, binds 16S rRNA. The cofactor is Zn(2+).

The protein localises to the cytoplasm. In terms of biological role, one of several proteins that assist in the late maturation steps of the functional core of the 30S ribosomal subunit. Helps release RbfA from mature subunits. May play a role in the assembly of ribosomal proteins into the subunit. Circularly permuted GTPase that catalyzes slow GTP hydrolysis, GTPase activity is stimulated by the 30S ribosomal subunit. This Borreliella afzelii (strain PKo) (Borrelia afzelii) protein is Small ribosomal subunit biogenesis GTPase RsgA.